The following is a 351-amino-acid chain: DNA polymerase IV (351 aa).

Residues 4-185 (IIHVDMDCFF…LPLGKIPGVG (182 aa)) form the UmuC domain. The Mg(2+) site is built by D8 and D103. E104 is a catalytic residue.

The protein belongs to the DNA polymerase type-Y family. As to quaternary structure, monomer. Mg(2+) serves as cofactor.

The protein localises to the cytoplasm. It carries out the reaction DNA(n) + a 2'-deoxyribonucleoside 5'-triphosphate = DNA(n+1) + diphosphate. Functionally, poorly processive, error-prone DNA polymerase involved in untargeted mutagenesis. Copies undamaged DNA at stalled replication forks, which arise in vivo from mismatched or misaligned primer ends. These misaligned primers can be extended by PolIV. Exhibits no 3'-5' exonuclease (proofreading) activity. May be involved in translesional synthesis, in conjunction with the beta clamp from PolIII. The polypeptide is DNA polymerase IV (Cronobacter sakazakii (strain ATCC BAA-894) (Enterobacter sakazakii)).